Consider the following 273-residue polypeptide: Oxidized low-density lipoprotein receptor 1 (273 aa).

Residues 1–22 are disordered; it reads MTFDDLKIQTVKDQPDEKSNGK. The Cytoplasmic portion of the chain corresponds to 1–36; sequence MTFDDLKIQTVKDQPDEKSNGKKAKGLQFLYSPWWC. Residues cysteine 36 and cysteine 46 are each lipidated (S-palmitoyl cysteine). Residues 37–57 traverse the membrane as a helical; Signal-anchor for type II membrane protein segment; that stretch reads LAAATLGVLCLGLVVTIMVLG. The segment at 58 to 150 is neck; it reads MQLSQVSDLL…SAPCPQDWIW (93 aa). Topologically, residues 58-273 are extracellular; sequence MQLSQVSDLL…CQKKANLRAQ (216 aa). Positions 64–123 form a coiled coil; sequence SDLLTQEQANLTHQKKKLEGQISARQQAEEASQESENELKEMIETLARKLNEKSKEQMEL. N-linked (GlcNAc...) asparagine glycosylation occurs at asparagine 73. The N-linked (GlcNAc...) (complex) asparagine glycan is linked to asparagine 139. Intrachain disulfides connect cysteine 144-cysteine 155, cysteine 172-cysteine 264, and cysteine 243-cysteine 256. Residues 151 to 265 form the C-type lectin domain; it reads HGENCYLFSS…CILAAFSICQ (115 aa).

In terms of assembly, homodimer; disulfide-linked. May form a hexamer composed of 3 homodimers. Interacts with HSP70. As to quaternary structure, (Microbial infection) Binds to the head and beginning of the coiled stalk of N.meningitidis adhesin A (nadA) variant 3; binding can be abrogated by monoclonal antibodies against the specific regions of NadA. Binding occurs in protein microarrays, in solution and when LOX-1 is expressed on the cell surface. In terms of processing, the intrachain disulfide-bonds prevent N-glycosylation at some sites. N-glycosylated. In terms of tissue distribution, expressed at high level in endothelial cells and vascular-rich organs such as placenta, lung, liver and brain, aortic intima, bone marrow, spinal cord and substantia nigra. Also expressed at the surface of dendritic cells. Widely expressed at intermediate and low level.

It is found in the cell membrane. Its subcellular location is the membrane raft. It localises to the secreted. Receptor that mediates the recognition, internalization and degradation of oxidatively modified low density lipoprotein (oxLDL) by vascular endothelial cells. OxLDL is a marker of atherosclerosis that induces vascular endothelial cell activation and dysfunction, resulting in pro-inflammatory responses, pro-oxidative conditions and apoptosis. Its association with oxLDL induces the activation of NF-kappa-B through an increased production of intracellular reactive oxygen and a variety of pro-atherogenic cellular responses including a reduction of nitric oxide (NO) release, monocyte adhesion and apoptosis. In addition to binding oxLDL, it acts as a receptor for the HSP70 protein involved in antigen cross-presentation to naive T-cells in dendritic cells, thereby participating in cell-mediated antigen cross-presentation. Also involved in inflammatory process, by acting as a leukocyte-adhesion molecule at the vascular interface in endotoxin-induced inflammation. Also acts as a receptor for advanced glycation end (AGE) products, activated platelets, monocytes, apoptotic cells and both Gram-negative and Gram-positive bacteria. In terms of biological role, (Microbial infection) May serve as a receptor for adhesin A variant 3 (nadA) of N.meningitidis. The protein is Oxidized low-density lipoprotein receptor 1 (OLR1) of Homo sapiens (Human).